The following is a 113-amino-acid chain: Large ribosomal subunit protein bL17 (113 aa).

It belongs to the bacterial ribosomal protein bL17 family. Part of the 50S ribosomal subunit. Contacts protein L32.

In Symbiobacterium thermophilum (strain DSM 24528 / JCM 14929 / IAM 14863 / T), this protein is Large ribosomal subunit protein bL17.